The chain runs to 126 residues: Non-specific lipid-transfer protein 13 (126 aa).

Positions 1-20 are cleaved as a signal peptide; that stretch reads MDTHTTKLVAISLLLLLVIS. 4 cysteine pairs are disulfide-bonded: Cys-36-Cys-85, Cys-46-Cys-61, Cys-62-Cys-109, and Cys-83-Cys-123.

This sequence belongs to the plant LTP family.

Functionally, plant non-specific lipid-transfer proteins transfer phospholipids as well as galactolipids across membranes. May play a role in wax or cutin deposition in the cell walls of expanding epidermal cells and certain secretory tissues. The protein is Non-specific lipid-transfer protein 13 (LTP13) of Arabidopsis thaliana (Mouse-ear cress).